The chain runs to 1322 residues: Chitin synthase chs-1 (1322 aa).

Residues 1–39 (MNDGENYWNAFRSHKRSATDGPTLSPWMVTVLQATKLLL) are Extracellular-facing. Residues 40–60 (FALCNIVLTLGSVFSKLIVLI) form a helical membrane-spanning segment. Over 61-128 (MATNIVPRAH…KGQCGQLVKS (68 aa)) the chain is Cytoplasmic. Residues 129–149 (VVVLESLRAIGLAVLSFHVFP) form a helical membrane-spanning segment. The Extracellular segment spans residues 150–156 (QLDLARC). A helical membrane pass occupies residues 157 to 177 (LVLSACFPLVAVLQRSLVAMV). Topologically, residues 178–193 (SAARTGRSFRNRLGRC) are cytoplasmic. Residues 194-214 (FVAIPHVIMFLVLMSSCYVWA) traverse the membrane as a helical segment. Over 215–221 (LFDNKFT) the chain is Extracellular. A helical membrane pass occupies residues 222–242 (AIIALPIGVICTSAGFWESWI). At 243–269 (DTTHSGTSFDELYRLKYAVRKMNTTTK) the chain is on the cytoplasmic side. The helical transmembrane segment at 270-290 (LIVSLMRIVCTVSVLVSAVYI) threads the bilayer. The Extracellular segment spans residues 291–316 (NDHKKLNSSHFVKAFFSFSTRQPHTR). Asparagine 297 is a glycosylation site (N-linked (GlcNAc...) asparagine). The chain crosses the membrane as a helical span at residues 317 to 337 (LLLLATGIIVLHFVMRGISRF). At 338–342 (LAALD) the chain is on the cytoplasmic side. Residues 343 to 363 (LHPFSFVHPLSIAPLIAYGYV) form a helical membrane-spanning segment. The Extracellular segment spans residues 364 to 396 (RYACQSPTCSIARRLARFGLHWVCDQWFQSARG). The chain crosses the membrane as a helical span at residues 397–417 (IASPDFYICLIWLLVGCYRGW). Over 418 to 836 (RLVRQRYFDT…AISYAYIAYQ (419 aa)) the chain is Cytoplasmic. A coiled-coil region spans residues 455–486 (LNRQEKTMLTEEEDISDENDELRIRNDEVDRV). A helical membrane pass occupies residues 837–857 (FLVIFFSMLGPAIIFTMLVFA). Over 858–865 (QVAAFELR) the chain is Extracellular. A helical transmembrane segment spans residues 866-886 (GSDVMLYNGIPIGFFIVLCFT). The Cytoplasmic portion of the chain corresponds to 887-892 (TESNIQ). The helical transmembrane segment at 893–913 (LIYAKYMSIAYAFVMLAVLVA) threads the bilayer. Topologically, residues 914 to 922 (TSSQIVLET) are extracellular. A helical membrane pass occupies residues 923–943 (VLAPTSLFIVTMVGIFFFAAC). The Cytoplasmic portion of the chain corresponds to 944 to 951 (LHPKEFTN). The chain crosses the membrane as a helical span at residues 952–972 (IIHGVVFFLMIPSTYVFLTLY). Over 973 to 1148 (SLINLNVITW…AVAEGLASLR (176 aa)) the chain is Extracellular. The stretch at 1019–1053 (ISCREKKEHEERREKMEKKMQRMELALRSIESGAD) forms a coiled coil. Residues 1149–1169 (NQIAFTILLVNSLLALAIFLI) traverse the membrane as a helical segment. Topologically, residues 1170 to 1209 (QKHKNVLSIKFSPIKNFRWTKMNEMTGQYEETDEPLKIDP) are cytoplasmic. A helical transmembrane segment spans residues 1210-1230 (LGMGIVVFLLIILFVQTLGML). Over 1231–1322 (LHRLNTMIGA…MQRSALSTTE (92 aa)) the chain is Extracellular.

The protein belongs to the chitin synthase family. Class IV subfamily.

It localises to the cell membrane. The catalysed reaction is [(1-&gt;4)-N-acetyl-beta-D-glucosaminyl](n) + UDP-N-acetyl-alpha-D-glucosamine = [(1-&gt;4)-N-acetyl-beta-D-glucosaminyl](n+1) + UDP + H(+). Functionally, essential for the embryonic synthesis of chitin, a component of the eggshell. This chain is Chitin synthase chs-1, found in Caenorhabditis elegans.